Consider the following 403-residue polypeptide: GPI mannosyltransferase 1 (403 aa).

Topologically, residues 1 to 4 are cytoplasmic; that stretch reads MTGE. The helical transmembrane segment at 5 to 25 threads the bilayer; the sequence is EWGLTVLSFLVRVGFFLFGIY. Residues 26 to 78 are Lumenal-facing; the sequence is QDANFKVRYTDIDYFVFHDAAKYVYEGKSPYARDTYRYTPLLSWLLVPNHYFG. Residues 79-99 traverse the membrane as a helical segment; the sequence is WFHLGKVIFVIFDLVTGLIIM. At 100–110 the chain is on the cytoplasmic side; the sequence is KLLNQAISRKR. Residues 111–131 traverse the membrane as a helical segment; that stretch reads ALILESIWLLNPMVITISTRG. Asn132 is a topological domain (lumenal). A helical membrane pass occupies residues 133-149; sequence AESVLCCLIMFTLFFLQ. Over 150 to 160 the chain is Cytoplasmic; it reads KSRYTLAGILY. Residues 161-181 traverse the membrane as a helical segment; sequence GLSIHFKIYPIIYCIPIAIFI. Topologically, residues 182-193 are lumenal; that stretch reads YYNKRNQGPRTQ. A helical transmembrane segment spans residues 194–214; the sequence is LTSLLNIGLSTLTTLLGCGWA. Residues 215-266 are Cytoplasmic-facing; the sequence is MYKIYGYEFLDQAYLYHLYRTDHRHNFSVWNMLLYLDSANKENGESNLSRYA. The helical transmembrane segment at 267–287 threads the bilayer; that stretch reads FVPQLLLVLVTGCLEWWNPTF. The Lumenal portion of the chain corresponds to 288 to 310; that stretch reads DNLLRVLFVQTFAFVTYNKVCTS. Residues 311–331 traverse the membrane as a helical segment; that stretch reads QYFVWYLIFLPFYLSRTHIGW. The Cytoplasmic portion of the chain corresponds to 332 to 334; it reads KKG. The helical transmembrane segment at 335–355 threads the bilayer; it reads LLMATLWVGTQGIWLSQGYYL. Topologically, residues 356 to 361 are lumenal; it reads EFEGKN. The helical transmembrane segment at 362–382 threads the bilayer; that stretch reads VFYPGLFIASVLFFVTNVWLL. Over 383–403 the chain is Cytoplasmic; it reads GQFITDIKIPTQPTVSNKKNN.

Belongs to the PIGM family.

Its subcellular location is the endoplasmic reticulum membrane. It participates in glycolipid biosynthesis; glycosylphosphatidylinositol-anchor biosynthesis. Its function is as follows. Mannosyltransferase involved in glycosylphosphatidylinositol-anchor biosynthesis. Transfers the first alpha-1,4-mannose to GlcN-acyl-PI during GPI precursor assembly. Required for cell wall integrity. The polypeptide is GPI mannosyltransferase 1 (GPI14) (Saccharomyces cerevisiae (strain ATCC 204508 / S288c) (Baker's yeast)).